A 299-amino-acid polypeptide reads, in one-letter code: NmrA-like family domain-containing protein 1 (299 aa).

Residues 11–16 (GGTGAQ), 37–41 (RNPRK), 58–59 (DQ), glutamine 62, 79–81 (TNY), lysine 92, lysine 133, and 155–158 (YFEN) each bind NADP(+). An interaction with ASS1 region spans residues 153–189 (PCYFENLLSHFLPQKAPDGKSYLLSLPTGDVPMDGMS).

The protein belongs to the NmrA-type oxidoreductase family. Homodimer. Interacts with ASS1. Interaction is enhanced by low NADPH/NADP(+) ratios, which results in inhibition of ASS1 activity.

Its subcellular location is the cytoplasm. It localises to the perinuclear region. It is found in the nucleus. Its function is as follows. Redox sensor protein. Undergoes restructuring and subcellular redistribution in response to changes in intracellular NADPH/NADP(+) levels. At low NADPH concentrations the protein is found mainly as a monomer, and binds argininosuccinate synthase (ASS1), the enzyme involved in nitric oxide synthesis. Association with ASS1 impairs its activity and reduces the production of nitric oxide, which subsecuently prevents apoptosis. Under normal NADPH concentrations, the protein is found as a dimer and hides the binding site for ASS1. The homodimer binds one molecule of NADPH. Has higher affinity for NADPH than for NADP(+). Binding to NADPH is necessary to form a stable dimer. The sequence is that of NmrA-like family domain-containing protein 1 (NMRAL1) from Homo sapiens (Human).